Reading from the N-terminus, the 657-residue chain is Threonine--tRNA ligase (657 aa).

Residues 1–61 (MINVTLPDGS…EGDASVAIIT (61 aa)) enclose the TGS domain. Positions 244–549 (DHRKLGAQLD…LIENYAGSFP (306 aa)) are catalytic. Cysteine 349, histidine 400, and histidine 526 together coordinate Zn(2+).

It belongs to the class-II aminoacyl-tRNA synthetase family. Homodimer. Requires Zn(2+) as cofactor.

It localises to the cytoplasm. It carries out the reaction tRNA(Thr) + L-threonine + ATP = L-threonyl-tRNA(Thr) + AMP + diphosphate + H(+). In terms of biological role, catalyzes the attachment of threonine to tRNA(Thr) in a two-step reaction: L-threonine is first activated by ATP to form Thr-AMP and then transferred to the acceptor end of tRNA(Thr). Also edits incorrectly charged L-seryl-tRNA(Thr). The protein is Threonine--tRNA ligase of Hyphomonas neptunium (strain ATCC 15444).